Consider the following 657-residue polypeptide: Glycogen debranching enzyme (657 aa).

The active-site Nucleophile is the Asp-336. The active-site Proton donor is Glu-371. The disordered stretch occupies residues Ala-460–Lys-479.

This sequence belongs to the glycosyl hydrolase 13 family.

It catalyses the reaction Hydrolysis of (1-&gt;6)-alpha-D-glucosidic linkages to branches with degrees of polymerization of three or four glucose residues in limit dextrin.. Its pathway is glycan degradation; glycogen degradation. Its function is as follows. Removes maltotriose and maltotetraose chains that are attached by 1,6-alpha-linkage to the limit dextrin main chain, generating a debranched limit dextrin. The chain is Glycogen debranching enzyme from Escherichia coli O9:H4 (strain HS).